A 183-amino-acid polypeptide reads, in one-letter code: Mitochondrial import inner membrane translocase subunit tim17 (183 aa).

3 helical membrane-spanning segments follow: residues 13-33 (AGGA…GLGF), 57-77 (GGNF…LSYI), and 107-127 (VQAA…QHMM). A compositionally biased stretch (polar residues) spans 131 to 141 (MQAQQEEMTQQ). Positions 131–183 (MQAQQEEMTQQHLEERKRYEEERKQREGERKKLNENGKSKKNKQQQNGENDLD) are disordered. Basic and acidic residues predominate over residues 142 to 168 (HLEERKRYEEERKQREGERKKLNENGK). Residues 174-183 (QQQNGENDLD) are compositionally biased toward low complexity.

Belongs to the Tim17/Tim22/Tim23 family.

It localises to the mitochondrion inner membrane. In terms of biological role, may be involved in the translocation of transit peptide-containing proteins across the mitochondrial inner membrane. In Dictyostelium discoideum (Social amoeba), this protein is Mitochondrial import inner membrane translocase subunit tim17 (timm17).